Reading from the N-terminus, the 239-residue chain is Myogenic factor 6 (239 aa).

Positions 28–59 are disordered; it reads PGVSPLYEGNDSPLSPGQDPVPSETGCESSGE. The bHLH domain occupies 92 to 143; the sequence is DRRKAATLRERRRLKKINEAFDALKKKTVPNPNQRLPKVEILRSAINYIEKL. Polar residues predominate over residues 182 to 196; it reads CQSWQENPDHSSSQM. The disordered stretch occupies residues 182 to 239; it reads CQSWQENPDHSSSQMAGHREGAVLESSESSSLRRLSSIVDSISTEEPKARCPSQISEK. A compositionally biased stretch (low complexity) spans 204–223; that stretch reads VLESSESSSLRRLSSIVDSI.

In terms of assembly, efficient DNA binding requires dimerization with another bHLH protein.

It localises to the nucleus. Functionally, involved in muscle differentiation (myogenic factor). Induces fibroblasts to differentiate into myoblasts. Probable sequence specific DNA-binding protein. This Danio rerio (Zebrafish) protein is Myogenic factor 6 (myf6).